The following is a 311-amino-acid chain: Burkholderia TALE-like protein 3 (311 aa).

The Cryptic repeat -1 repeat unit spans residues 19–50 (LSPFECLKIEKHSGGADALEFISNKYDALTQV). Residues 51–83 (LSRADILKIACHDCAAHALQAVLDYEQVFRQRG) form a Cryptic repeat 0 repeat. Core repeat repeat units lie at residues 84–116 (FARA…NECG), 117–149 (FSQA…NERD), 150–182 (YSGA…CESG), 183–215 (YSGA…CERG), 216–248 (YCRT…CERG), and 249–281 (YSRT…TQAG). One copy of the Cryptic repeat +1 repeat lies at 282–311 (RSNEDIVNMAARTGAAGQIRKMAAQLSGRQ).

It belongs to the transcription activator-like effector (TALE) family. Bat subfamily.

Functionally, does not bind DNA, probably because it has too few core repeats. This is Burkholderia TALE-like protein 3 from Mycetohabitans rhizoxinica (strain DSM 19002 / CIP 109453 / HKI 454) (Paraburkholderia rhizoxinica).